A 308-amino-acid polypeptide reads, in one-letter code: UPF0282 protein M1425_2116 (308 aa).

This sequence belongs to the UPF0282 family.

The sequence is that of UPF0282 protein M1425_2116 from Saccharolobus islandicus (strain M.14.25 / Kamchatka #1) (Sulfolobus islandicus).